A 526-amino-acid polypeptide reads, in one-letter code: Exodeoxyribonuclease 7 large subunit (526 aa).

The tract at residues glycine 496–phenylalanine 526 is disordered.

This sequence belongs to the XseA family. In terms of assembly, heterooligomer composed of large and small subunits.

The protein localises to the cytoplasm. The enzyme catalyses Exonucleolytic cleavage in either 5'- to 3'- or 3'- to 5'-direction to yield nucleoside 5'-phosphates.. In terms of biological role, bidirectionally degrades single-stranded DNA into large acid-insoluble oligonucleotides, which are then degraded further into small acid-soluble oligonucleotides. The chain is Exodeoxyribonuclease 7 large subunit from Rhizobium etli (strain CIAT 652).